A 114-amino-acid chain; its full sequence is ATP synthase epsilon chain (114 aa).

This sequence belongs to the ATPase epsilon chain family. F-type ATPases have 2 components, CF(1) - the catalytic core - and CF(0) - the membrane proton channel. CF(1) has five subunits: alpha(3), beta(3), gamma(1), delta(1), epsilon(1). CF(0) has three main subunits: a, b and c.

The protein localises to the cell membrane. Functionally, produces ATP from ADP in the presence of a proton gradient across the membrane. The chain is ATP synthase epsilon chain from Wolbachia pipientis wMel.